The chain runs to 447 residues: Phosphoglucosamine mutase (447 aa).

Residue Ser-104 is the Phosphoserine intermediate of the active site. The Mg(2+) site is built by Ser-104, Asp-243, Asp-245, and Asp-247. Position 104 is a phosphoserine (Ser-104).

The protein belongs to the phosphohexose mutase family. It depends on Mg(2+) as a cofactor. Post-translationally, activated by phosphorylation.

It catalyses the reaction alpha-D-glucosamine 1-phosphate = D-glucosamine 6-phosphate. In terms of biological role, catalyzes the conversion of glucosamine-6-phosphate to glucosamine-1-phosphate. The sequence is that of Phosphoglucosamine mutase from Corynebacterium diphtheriae (strain ATCC 700971 / NCTC 13129 / Biotype gravis).